We begin with the raw amino-acid sequence, 350 residues long: UDP-N-acetylenolpyruvoylglucosamine reductase (350 aa).

An FAD-binding PCMH-type domain is found at 24 to 195; sequence HVEATARWLL…VAVEFNLPLL (172 aa). Arginine 172 is a catalytic residue. Residue serine 245 is the Proton donor of the active site. Glutamate 342 is a catalytic residue.

The protein belongs to the MurB family. The cofactor is FAD.

The protein localises to the cytoplasm. It catalyses the reaction UDP-N-acetyl-alpha-D-muramate + NADP(+) = UDP-N-acetyl-3-O-(1-carboxyvinyl)-alpha-D-glucosamine + NADPH + H(+). It functions in the pathway cell wall biogenesis; peptidoglycan biosynthesis. Cell wall formation. This Xanthomonas axonopodis pv. citri (strain 306) protein is UDP-N-acetylenolpyruvoylglucosamine reductase.